The chain runs to 315 residues: Tyrosine--tRNA ligase (315 aa).

Tyr-32 contributes to the L-tyrosine binding site. The short motif at Pro-37–His-45 is the 'HIGH' region element. The L-tyrosine site is built by Tyr-152, Gln-156, Asp-159, and Gln-174. The 'KMSKS' region signature appears at Lys-208 to Ser-212. Ser-211 lines the ATP pocket.

Belongs to the class-I aminoacyl-tRNA synthetase family. TyrS type 3 subfamily. Homodimer.

The protein localises to the cytoplasm. The enzyme catalyses tRNA(Tyr) + L-tyrosine + ATP = L-tyrosyl-tRNA(Tyr) + AMP + diphosphate + H(+). Its function is as follows. Catalyzes the attachment of tyrosine to tRNA(Tyr) in a two-step reaction: tyrosine is first activated by ATP to form Tyr-AMP and then transferred to the acceptor end of tRNA(Tyr). This Methanoculleus marisnigri (strain ATCC 35101 / DSM 1498 / JR1) protein is Tyrosine--tRNA ligase.